We begin with the raw amino-acid sequence, 316 residues long: Malate dehydrogenase 2 (316 aa).

NAD(+)-binding positions include 10-15 and D34; that span reads GGGQIG. The substrate site is built by R83 and R89. Residues N96 and 119 to 121 contribute to the NAD(+) site; that span reads ISN. N121 and R152 together coordinate substrate. H176 (proton acceptor) is an active-site residue.

This sequence belongs to the LDH/MDH superfamily. MDH type 3 family.

It catalyses the reaction (S)-malate + NAD(+) = oxaloacetate + NADH + H(+). Catalyzes the reversible oxidation of malate to oxaloacetate. This Anaeromyxobacter dehalogenans (strain 2CP-C) protein is Malate dehydrogenase 2.